Here is a 596-residue protein sequence, read N- to C-terminus: Elongation factor 4 (596 aa).

The tr-type G domain maps to 2-183 (KNIRNFSIIA…TIITKIPAPK (182 aa)). GTP contacts are provided by residues 14–19 (DHGKST) and 130–133 (NKID).

The protein belongs to the TRAFAC class translation factor GTPase superfamily. Classic translation factor GTPase family. LepA subfamily.

It localises to the cell inner membrane. It catalyses the reaction GTP + H2O = GDP + phosphate + H(+). Required for accurate and efficient protein synthesis under certain stress conditions. May act as a fidelity factor of the translation reaction, by catalyzing a one-codon backward translocation of tRNAs on improperly translocated ribosomes. Back-translocation proceeds from a post-translocation (POST) complex to a pre-translocation (PRE) complex, thus giving elongation factor G a second chance to translocate the tRNAs correctly. Binds to ribosomes in a GTP-dependent manner. The chain is Elongation factor 4 from Campylobacter lari (strain RM2100 / D67 / ATCC BAA-1060).